Here is a 197-residue protein sequence, read N- to C-terminus: Thymidine kinase (197 aa).

ATP-binding positions include 9 to 16 (SAMDAGKT) and 87 to 90 (DEIH). Glu88 (proton acceptor) is an active-site residue. Residues Cys145, Cys147, Cys187, and His190 each coordinate Zn(2+).

This sequence belongs to the thymidine kinase family. As to quaternary structure, homotetramer.

The protein resides in the cytoplasm. It catalyses the reaction thymidine + ATP = dTMP + ADP + H(+). This is Thymidine kinase from Francisella tularensis subsp. holarctica (strain LVS).